The following is a 243-amino-acid chain: Small ribosomal subunit protein uS2 (243 aa).

Belongs to the universal ribosomal protein uS2 family.

The polypeptide is Small ribosomal subunit protein uS2 (Chromobacterium violaceum (strain ATCC 12472 / DSM 30191 / JCM 1249 / CCUG 213 / NBRC 12614 / NCIMB 9131 / NCTC 9757 / MK)).